The chain runs to 435 residues: Endoglucanase EG-1 (435 aa).

An N-terminal signal peptide occupies residues 1 to 20 (MARGTALLGLTSLLLGLVNG). Glutamine 21 is subject to Pyrrolidone carboxylic acid. 3 disulfides stabilise this stretch: cysteine 38–cysteine 44, cysteine 71–cysteine 93, and cysteine 83–cysteine 89. The N-linked (GlcNAc...) asparagine glycan is linked to asparagine 109. Disulfide bonds link cysteine 160–cysteine 385, cysteine 192–cysteine 215, cysteine 196–cysteine 214, cysteine 235–cysteine 254, cysteine 243–cysteine 248, and cysteine 259–cysteine 335. Glutamate 217 functions as the Nucleophile in the catalytic mechanism. Glutamate 222 acts as the Proton donor in catalysis. The N-linked (GlcNAc...) asparagine glycan is linked to asparagine 267.

It belongs to the glycosyl hydrolase 7 (cellulase C) family.

Its subcellular location is the secreted. The enzyme catalyses Endohydrolysis of (1-&gt;4)-beta-D-glucosidic linkages in cellulose, lichenin and cereal beta-D-glucans.. In terms of biological role, the biological conversion of cellulose to glucose generally requires three types of hydrolytic enzymes: (1) Endoglucanases which cut internal beta-1,4-glucosidic bonds; (2) Exocellobiohydrolases that cut the disaccharide cellobiose from the non-reducing end of the cellulose polymer chain; (3) Beta-1,4-glucosidases which hydrolyze the cellobiose and other short cello-oligosaccharides to glucose. The sequence is that of Endoglucanase EG-1 (EG-1) from Humicola insolens (Soft-rot fungus).